Here is a 276-residue protein sequence, read N- to C-terminus: Dermonecrotic toxin LlSicTox-alphaIV2ii (276 aa).

Residue H5 is part of the active site. Mg(2+)-binding residues include E25 and D27. The Nucleophile role is filled by H41. 2 disulfide bridges follow: C45–C51 and C47–C193. Residue D85 participates in Mg(2+) binding.

The protein belongs to the arthropod phospholipase D family. Class II subfamily. The cofactor is Mg(2+). As to expression, expressed by the venom gland.

Its subcellular location is the secreted. It catalyses the reaction an N-(acyl)-sphingosylphosphocholine = an N-(acyl)-sphingosyl-1,3-cyclic phosphate + choline. The catalysed reaction is an N-(acyl)-sphingosylphosphoethanolamine = an N-(acyl)-sphingosyl-1,3-cyclic phosphate + ethanolamine. The enzyme catalyses a 1-acyl-sn-glycero-3-phosphocholine = a 1-acyl-sn-glycero-2,3-cyclic phosphate + choline. It carries out the reaction a 1-acyl-sn-glycero-3-phosphoethanolamine = a 1-acyl-sn-glycero-2,3-cyclic phosphate + ethanolamine. Dermonecrotic toxins cleave the phosphodiester linkage between the phosphate and headgroup of certain phospholipids (sphingolipid and lysolipid substrates), forming an alcohol (often choline) and a cyclic phosphate. This toxin acts on sphingomyelin (SM). It may also act on ceramide phosphoethanolamine (CPE), lysophosphatidylcholine (LPC) and lysophosphatidylethanolamine (LPE), but not on lysophosphatidylserine (LPS), and lysophosphatidylglycerol (LPG). It acts by transphosphatidylation, releasing exclusively cyclic phosphate products as second products. Induces dermonecrosis, hemolysis, increased vascular permeability, edema, inflammatory response, and platelet aggregation. This chain is Dermonecrotic toxin LlSicTox-alphaIV2ii, found in Loxosceles laeta (South American recluse spider).